The following is a 329-amino-acid chain: Apolipoprotein E (329 aa).

The signal sequence occupies residues 1-18 (MKVLWAALVVALLAGCWA). Repeat copies occupy residues 92-113 (TLME…EQLG), 114-135 (PMAS…ARLR), 136-157 (SDME…AMLG), 158-179 (QSTE…KRVL), 180-201 (RDAE…EGAE), 202-223 (RSVS…TRHA), 224-245 (KVDA…QQLR), and 246-267 (GRLE…EQME). Residues 92 to 267 (TLMEETMKEI…HLDEVREQME (176 aa)) form an 8 X 22 AA approximate tandem repeats region. The residue at position 155 (methionine 155) is a Methionine sulfoxide. Serine 159 is modified (phosphoserine). The segment at 170–180 (HMRKLRKRVLR) is LDL and other lipoprotein receptors binding. Residue 174-177 (LRKR) coordinates heparin. Residues 222–302 (HAKVDALATQ…GWFEPLVEDM (81 aa)) form a lipid-binding and lipoprotein association region. Residue 241–248 (GQQLRGRL) coordinates heparin. The segment at 278–329 (NQMRQQAEPFQARLKGWFEPLVEDMQRQWAVLVEKVQAAVGTSPTTPPVETK) is homooligomerization. A specificity for association with VLDL region spans residues 290-302 (RLKGWFEPLVEDM).

This sequence belongs to the apolipoprotein A1/A4/E family. As to quaternary structure, homotetramer. May interact with ABCA1; functionally associated with ABCA1 in the biogenesis of HDLs. May interact with APP/A4 amyloid-beta peptide; the interaction is extremely stable in vitro but its physiological significance is unclear. May interact with MAPT. May interact with MAP2. In the cerebrospinal fluid, interacts with secreted SORL1. Interacts with PMEL; this allows the loading of PMEL luminal fragment on ILVs to induce fibril nucleation. In terms of processing, APOE exists as multiple glycosylated and sialylated glycoforms within cells and in plasma. The extent of glycosylation and sialylation are tissue and context specific. Glycated in plasma VLDL. Post-translationally, phosphorylated by FAM20C in the extracellular medium.

It localises to the secreted. The protein localises to the extracellular space. It is found in the extracellular matrix. Its subcellular location is the extracellular vesicle. The protein resides in the endosome. It localises to the multivesicular body. Its function is as follows. APOE is an apolipoprotein, a protein associating with lipid particles, that mainly functions in lipoprotein-mediated lipid transport between organs via the plasma and interstitial fluids. APOE is a core component of plasma lipoproteins and is involved in their production, conversion and clearance. Apolipoproteins are amphipathic molecules that interact both with lipids of the lipoprotein particle core and the aqueous environment of the plasma. As such, APOE associates with chylomicrons, chylomicron remnants, very low density lipoproteins (VLDL) and intermediate density lipoproteins (IDL) but shows a preferential binding to high-density lipoproteins (HDL). It also binds a wide range of cellular receptors including the LDL receptor/LDLR, the LDL receptor-related proteins LRP1, LRP2 and LRP8 and the very low-density lipoprotein receptor/VLDLR that mediate the cellular uptake of the APOE-containing lipoprotein particles. Finally, APOE also has a heparin-binding activity and binds heparan-sulfate proteoglycans on the surface of cells, a property that supports the capture and the receptor-mediated uptake of APOE-containing lipoproteins by cells. A main function of APOE is to mediate lipoprotein clearance through the uptake of chylomicrons, VLDLs, and HDLs by hepatocytes. APOE is also involved in the biosynthesis by the liver of VLDLs as well as their uptake by peripheral tissues ensuring the delivery of triglycerides and energy storage in muscle, heart and adipose tissues. By participating in the lipoprotein-mediated distribution of lipids among tissues, APOE plays a critical role in plasma and tissues lipid homeostasis. APOE is also involved in two steps of reverse cholesterol transport, the HDLs-mediated transport of cholesterol from peripheral tissues to the liver, and thereby plays an important role in cholesterol homeostasis. First, it is functionally associated with ABCA1 in the biogenesis of HDLs in tissues. Second, it is enriched in circulating HDLs and mediates their uptake by hepatocytes. APOE also plays an important role in lipid transport in the central nervous system, regulating neuron survival and sprouting. This is Apolipoprotein E (APOE) from Arctocephalus gazella (Antarctic fur seal).